A 190-amino-acid polypeptide reads, in one-letter code: Potassium-transporting ATPase KdpC subunit (190 aa).

A helical transmembrane segment spans residues 10–30 (TFLFLLLITGGVYPLLTTALG).

The protein belongs to the KdpC family. In terms of assembly, the system is composed of three essential subunits: KdpA, KdpB and KdpC.

The protein resides in the cell inner membrane. Part of the high-affinity ATP-driven potassium transport (or Kdp) system, which catalyzes the hydrolysis of ATP coupled with the electrogenic transport of potassium into the cytoplasm. This subunit acts as a catalytic chaperone that increases the ATP-binding affinity of the ATP-hydrolyzing subunit KdpB by the formation of a transient KdpB/KdpC/ATP ternary complex. The polypeptide is Potassium-transporting ATPase KdpC subunit (Escherichia coli O45:K1 (strain S88 / ExPEC)).